Reading from the N-terminus, the 354-residue chain is 3-isopropylmalate dehydrogenase (354 aa).

NAD(+) is bound at residue 76–87 (GPRWDGAKERPE). 4 residues coordinate substrate: arginine 94, arginine 104, arginine 130, and aspartate 215. Mg(2+) is bound by residues aspartate 215, aspartate 239, and aspartate 243. Residue 273–285 (GSAPDIAGKNKAN) coordinates NAD(+).

Belongs to the isocitrate and isopropylmalate dehydrogenases family. LeuB type 1 subfamily. As to quaternary structure, homodimer. Mg(2+) is required as a cofactor. Requires Mn(2+) as cofactor.

It localises to the cytoplasm. It catalyses the reaction (2R,3S)-3-isopropylmalate + NAD(+) = 4-methyl-2-oxopentanoate + CO2 + NADH. The protein operates within amino-acid biosynthesis; L-leucine biosynthesis; L-leucine from 3-methyl-2-oxobutanoate: step 3/4. In terms of biological role, catalyzes the oxidation of 3-carboxy-2-hydroxy-4-methylpentanoate (3-isopropylmalate) to 3-carboxy-4-methyl-2-oxopentanoate. The product decarboxylates to 4-methyl-2 oxopentanoate. This is 3-isopropylmalate dehydrogenase from Bacillus cereus (strain ZK / E33L).